The chain runs to 430 residues: 3-phosphoshikimate 1-carboxyvinyltransferase (430 aa).

Residues lysine 20, serine 21, and arginine 25 each coordinate 3-phosphoshikimate. Position 20 (lysine 20) interacts with phosphoenolpyruvate. Residues glycine 92 and arginine 120 each contribute to the phosphoenolpyruvate site. 4 residues coordinate 3-phosphoshikimate: serine 166, glutamine 168, aspartate 312, and lysine 339. Phosphoenolpyruvate is bound at residue glutamine 168. The active-site Proton acceptor is the aspartate 312. Phosphoenolpyruvate-binding residues include arginine 343 and arginine 387.

It belongs to the EPSP synthase family. Monomer.

It is found in the cytoplasm. It carries out the reaction 3-phosphoshikimate + phosphoenolpyruvate = 5-O-(1-carboxyvinyl)-3-phosphoshikimate + phosphate. The protein operates within metabolic intermediate biosynthesis; chorismate biosynthesis; chorismate from D-erythrose 4-phosphate and phosphoenolpyruvate: step 6/7. In terms of biological role, catalyzes the transfer of the enolpyruvyl moiety of phosphoenolpyruvate (PEP) to the 5-hydroxyl of shikimate-3-phosphate (S3P) to produce enolpyruvyl shikimate-3-phosphate and inorganic phosphate. This Lactococcus lactis subsp. cremoris (strain MG1363) protein is 3-phosphoshikimate 1-carboxyvinyltransferase.